We begin with the raw amino-acid sequence, 338 residues long: Protein SPATA31F3 (338 aa).

The helical transmembrane segment at 7 to 29 (VLWDVGYPLYTYGSICIIALIIW) threads the bilayer. Residue Ser-152 is modified to Phosphoserine. Positions 290–306 (DRTKNIEKSPTVTKDHV) are enriched in basic and acidic residues. Residues 290 to 338 (DRTKNIEKSPTVTKDHVWGATTQKTTEDPEAQPPSTEEEGLIFCDAPSA) form a disordered region.

It belongs to the SPATA31 family.

Its subcellular location is the membrane. The protein is Protein SPATA31F3 of Homo sapiens (Human).